We begin with the raw amino-acid sequence, 656 residues long: 1-deoxy-D-xylulose-5-phosphate synthase 1 (656 aa).

Residues histidine 73 and 113–115 (SHA) contribute to the thiamine diphosphate site. Mg(2+) is bound at residue aspartate 144. Thiamine diphosphate contacts are provided by residues 145–146 (GA), asparagine 174, tyrosine 285, and glutamate 367. Asparagine 174 is a Mg(2+) binding site. Residues 625 to 656 (AGDRAGGPAVEQPGDGRMSGDGRIVMPAQGEN) are disordered.

Belongs to the transketolase family. DXPS subfamily. As to quaternary structure, homodimer. It depends on Mg(2+) as a cofactor. Thiamine diphosphate is required as a cofactor.

The catalysed reaction is D-glyceraldehyde 3-phosphate + pyruvate + H(+) = 1-deoxy-D-xylulose 5-phosphate + CO2. It participates in metabolic intermediate biosynthesis; 1-deoxy-D-xylulose 5-phosphate biosynthesis; 1-deoxy-D-xylulose 5-phosphate from D-glyceraldehyde 3-phosphate and pyruvate: step 1/1. Functionally, catalyzes the acyloin condensation reaction between C atoms 2 and 3 of pyruvate and glyceraldehyde 3-phosphate to yield 1-deoxy-D-xylulose-5-phosphate (DXP). The protein is 1-deoxy-D-xylulose-5-phosphate synthase 1 of Streptomyces coelicolor (strain ATCC BAA-471 / A3(2) / M145).